The following is a 249-amino-acid chain: tRNA pseudouridine synthase A (249 aa).

Residue Asp-54 is the Nucleophile of the active site. Substrate is bound at residue Tyr-112.

Belongs to the tRNA pseudouridine synthase TruA family. In terms of assembly, homodimer.

It carries out the reaction uridine(38/39/40) in tRNA = pseudouridine(38/39/40) in tRNA. Its function is as follows. Formation of pseudouridine at positions 38, 39 and 40 in the anticodon stem and loop of transfer RNAs. In Latilactobacillus sakei subsp. sakei (strain 23K) (Lactobacillus sakei subsp. sakei), this protein is tRNA pseudouridine synthase A.